The primary structure comprises 181 residues: Protein GrpE (181 aa).

It belongs to the GrpE family. Homodimer.

It is found in the cytoplasm. In terms of biological role, participates actively in the response to hyperosmotic and heat shock by preventing the aggregation of stress-denatured proteins, in association with DnaK and GrpE. It is the nucleotide exchange factor for DnaK and may function as a thermosensor. Unfolded proteins bind initially to DnaJ; upon interaction with the DnaJ-bound protein, DnaK hydrolyzes its bound ATP, resulting in the formation of a stable complex. GrpE releases ADP from DnaK; ATP binding to DnaK triggers the release of the substrate protein, thus completing the reaction cycle. Several rounds of ATP-dependent interactions between DnaJ, DnaK and GrpE are required for fully efficient folding. This chain is Protein GrpE, found in Leptothrix cholodnii (strain ATCC 51168 / LMG 8142 / SP-6) (Leptothrix discophora (strain SP-6)).